The sequence spans 139 residues: Large ribosomal subunit protein uL16 (139 aa).

Positions 1 to 17 (MLQPKRTKYRKQQKGRM) are enriched in basic residues. The interval 1-25 (MLQPKRTKYRKQQKGRMKGLSQRGH) is disordered.

Belongs to the universal ribosomal protein uL16 family. Part of the 50S ribosomal subunit.

Functionally, binds 23S rRNA and is also seen to make contacts with the A and possibly P site tRNAs. This is Large ribosomal subunit protein uL16 from Christiangramia forsetii (strain DSM 17595 / CGMCC 1.15422 / KT0803) (Gramella forsetii).